The following is a 418-amino-acid chain: MLYLEDYLEMIEQLPMDLRDRFTEMREMDLQVQNAMDQLEQRVSEFFMNAKKNKPEWREEQMASIKKDYYKALEDADEKVQLANQIYDLVDRHLRKLDQELAKFKMELEADNAGITEILERRSLELDTPSQPVNNHHAHSHTPVEKRKYNPTSHHTTTDHIPEKKFKSEALLSTLTSDASKENTLGCRNNNSTASSNNAYNVNSSQPLGSYNIGSLSSGTGAGAITMAAAQAVQATAQMKEGRRTSSLKASYEAFKNNDFQLGKEFSMARETVGYSSSSALMTTLTQNASSSAADSRSGRKSKNNNKSSSQQSSSSSSSSSLSSCSSSSTVVQEISQQTTVVPESDSNSQVDWTYDPNEPRYCICNQVSYGEMVGCDNQDCPIEWFHYGCVGLTEAPKGKWYCPQCTAAMKRRGSRHK.

The tract at residues 127–165 (DTPSQPVNNHHAHSHTPVEKRKYNPTSHHTTTDHIPEKK) is disordered. Glycyl lysine isopeptide (Lys-Gly) (interchain with G-Cter in SUMO2) cross-links involve residues Lys148, Lys165, and Lys167. The segment covering 156-165 (TTTDHIPEKK) has biased composition (basic and acidic residues). Lys181 is modified (N6-acetyllysine). Lys256 participates in a covalent cross-link: Glycyl lysine isopeptide (Lys-Gly) (interchain with G-Cter in SUMO2). Lys264 is modified (N6-acetyllysine). The tract at residues 286–325 (TQNASSSAADSRSGRKSKNNNKSSSQQSSSSSSSSSLSSC) is disordered. A compositionally biased stretch (low complexity) spans 305–325 (NNKSSSQQSSSSSSSSSLSSC). The segment at 360-409 (PRYCICNQVSYGEMVGCDNQDCPIEWFHYGCVGLTEAPKGKWYCPQCTAA) adopts a PHD-type zinc-finger fold. 8 residues coordinate Zn(2+): Cys363, Cys365, Cys376, Cys381, His387, Cys390, Cys403, and Cys406.

This sequence belongs to the ING family. As to quaternary structure, interacts with H3K4me3 and to a lesser extent with H3K4me2. Component of the NuA4 histone acetyltransferase complex which contains the catalytic subunit KAT5/TIP60 and the subunits EP400, TRRAP/PAF400, BRD8/SMAP, EPC1, DMAP1/DNMAP1, RUVBL1/TIP49, RUVBL2, ING3, actin, ACTL6A/BAF53A, MORF4L1/MRG15, MORF4L2/MRGX, MRGBP, YEATS4/GAS41, VPS72/YL1 and MEAF6. The NuA4 complex interacts with MYC and the adenovirus E1A protein. HTATTIP/TIP60, EPC1, and ING3 together constitute a minimal HAT complex termed Piccolo NuA4. Component of a SWR1-like complex. In terms of tissue distribution, expressed in brain, heart, kidney, liver, lung, ovaries, placenta, prostate, skeletal muscle, small intestine, spleen, testis and thymus.

It localises to the nucleus. Component of the NuA4 histone acetyltransferase (HAT) complex which is involved in transcriptional activation of select genes principally by acetylation of nucleosomal histones H4 and H2A. This modification may both alter nucleosome - DNA interactions and promote interaction of the modified histones with other proteins which positively regulate transcription. This complex may be required for the activation of transcriptional programs associated with oncogene and proto-oncogene mediated growth induction, tumor suppressor mediated growth arrest and replicative senescence, apoptosis, and DNA repair. NuA4 may also play a direct role in DNA repair when directly recruited to sites of DNA damage. Component of a SWR1-like complex that specifically mediates the removal of histone H2A.Z/H2AZ1 from the nucleosome. The chain is Inhibitor of growth protein 3 (ING3) from Homo sapiens (Human).